A 708-amino-acid chain; its full sequence is Phosphate acetyltransferase (708 aa).

Residues 388 to 708 are phosphate acetyltransferase; the sequence is EFCYNLKLLS…TIALTSIQSE (321 aa).

This sequence in the N-terminal section; belongs to the CobB/CobQ family. In the C-terminal section; belongs to the phosphate acetyltransferase and butyryltransferase family. In terms of assembly, homohexamer.

The protein localises to the cytoplasm. It catalyses the reaction acetyl-CoA + phosphate = acetyl phosphate + CoA. It participates in metabolic intermediate biosynthesis; acetyl-CoA biosynthesis; acetyl-CoA from acetate: step 2/2. Its function is as follows. Involved in acetate metabolism. This chain is Phosphate acetyltransferase (pta), found in Buchnera aphidicola subsp. Acyrthosiphon pisum (strain APS) (Acyrthosiphon pisum symbiotic bacterium).